Consider the following 100-residue polypeptide: ATP synthase subunit c (100 aa).

The next 2 helical transmembrane spans lie at 26–46 (FSVV…AIGM) and 71–91 (MFIA…IALI).

It belongs to the ATPase C chain family. As to quaternary structure, F-type ATPases have 2 components, F(1) - the catalytic core - and F(0) - the membrane proton channel. F(1) has five subunits: alpha(3), beta(3), gamma(1), delta(1), epsilon(1). F(0) has three main subunits: a(1), b(2) and c(10-14). The alpha and beta chains form an alternating ring which encloses part of the gamma chain. F(1) is attached to F(0) by a central stalk formed by the gamma and epsilon chains, while a peripheral stalk is formed by the delta and b chains.

The protein localises to the cell inner membrane. F(1)F(0) ATP synthase produces ATP from ADP in the presence of a proton or sodium gradient. F-type ATPases consist of two structural domains, F(1) containing the extramembraneous catalytic core and F(0) containing the membrane proton channel, linked together by a central stalk and a peripheral stalk. During catalysis, ATP synthesis in the catalytic domain of F(1) is coupled via a rotary mechanism of the central stalk subunits to proton translocation. In terms of biological role, key component of the F(0) channel; it plays a direct role in translocation across the membrane. A homomeric c-ring of between 10-14 subunits forms the central stalk rotor element with the F(1) delta and epsilon subunits. The polypeptide is ATP synthase subunit c (Campylobacter fetus subsp. fetus (strain 82-40)).